A 495-amino-acid chain; its full sequence is Taxoid 2-alpha-hydroxylase (495 aa).

Residues leucine 17–leucine 37 form a helical membrane-spanning segment. Cysteine 441 is a heme binding site.

Belongs to the cytochrome P450 family.

Its subcellular location is the microsome membrane. The catalysed reaction is taxusin + reduced [NADPH--hemoprotein reductase] + O2 = 2alpha-hydroxytaxusin + oxidized [NADPH--hemoprotein reductase] + H2O + H(+). The enzyme catalyses 7beta-hydroxytaxusin + reduced [NADPH--hemoprotein reductase] + O2 = 2alpha,7beta-dihydroxytaxusin + oxidized [NADPH--hemoprotein reductase] + H2O + H(+). Its pathway is alkaloid biosynthesis; taxol biosynthesis. Its function is as follows. Catalyzes the conversion of taxusin to 2-alpha-hydroxytaxusin in taxol biosynthesis. Catalyzes the conversion of 7-beta-hydroxytaxusin to 2-alpha-7-beta-hydroxytaxusin in taxol biosynthesis. This chain is Taxoid 2-alpha-hydroxylase, found in Taxus canadensis (Canadian yew).